Here is a 92-residue protein sequence, read N- to C-terminus: Large ribosomal subunit protein bL27 (92 aa).

The interval Met1–Leu21 is disordered. A compositionally biased stretch (basic and acidic residues) spans Asn12–Leu21.

It belongs to the bacterial ribosomal protein bL27 family.

The polypeptide is Large ribosomal subunit protein bL27 (Halothermothrix orenii (strain H 168 / OCM 544 / DSM 9562)).